Here is a 309-residue protein sequence, read N- to C-terminus: Clotting factor G beta subunit (309 aa).

A signal peptide spans 1 to 31; that stretch reads MDISFLVFITLSMALFSSNVTGTSVTSRVRR. Intrachain disulfides connect cysteine 38–cysteine 158, cysteine 74–cysteine 90, cysteine 205–cysteine 227, and cysteine 238–cysteine 268. One can recognise a Peptidase S1 domain in the interval 47–292; it reads IIGGGIATPH…YVNWLQEITF (246 aa). Residue histidine 89 is the Charge relay system of the active site. A glycan (N-linked (GlcNAc...) asparagine) is linked at asparagine 100. Aspartate 138 serves as the catalytic Charge relay system. An N-linked (GlcNAc...) asparagine glycan is attached at asparagine 206. Serine 242 functions as the Charge relay system in the catalytic mechanism.

This sequence belongs to the peptidase S1 family. In terms of assembly, clotting factor G is a heterodimer composed of two non-covalently associated subunits, alpha and beta. Upon activation, converted to a two-chain active form linked by a disulfide bond. Forms a covalent heterodimer with intracellular coagulation inhibitor 3/LICI-3. Expressed in the hemocytes (at protein level).

It carries out the reaction Selective cleavage of 98-Arg-|-Ile-99 bond in Limulus proclotting enzyme to form active clotting enzyme.. With respect to regulation, binding to (1-&gt;3)-beta-D-glucan to alpha subunit, induces autocatalysis and activation of beta subunit. Inhibited by intracellular coagulation inhibitor 3/LICI-3 and to a lesser extend by intracellular coagulation inhibitor 2/LICI-2. In terms of biological role, component of the heterodimer clotting factor G which may play a role in defense mechanisms against fungi. Initiates a (1-&gt;3)-beta-glucan-sensing clotting pathway whereby the alpha subunit binds to glucans containing (1-&gt;3)-beta linkages, which are components of the fungal cell wall, and the beta subunit catalyzes the activation of proclotting enzyme. This chain is Clotting factor G beta subunit, found in Tachypleus tridentatus (Japanese horseshoe crab).